The chain runs to 239 residues: tRNA (guanine-N(7)-)-methyltransferase (239 aa).

4 residues coordinate S-adenosyl-L-methionine: E69, E94, D121, and D144. Residue D144 is part of the active site. K148 is a substrate binding site. The tract at residues 150 to 155 (RHNKRR) is interaction with RNA. Residues D180 and 217–220 (TKFE) each bind substrate.

Belongs to the class I-like SAM-binding methyltransferase superfamily. TrmB family. In terms of assembly, monomer.

The enzyme catalyses guanosine(46) in tRNA + S-adenosyl-L-methionine = N(7)-methylguanosine(46) in tRNA + S-adenosyl-L-homocysteine. The protein operates within tRNA modification; N(7)-methylguanine-tRNA biosynthesis. Its function is as follows. Catalyzes the formation of N(7)-methylguanine at position 46 (m7G46) in tRNA. The sequence is that of tRNA (guanine-N(7)-)-methyltransferase from Klebsiella pneumoniae subsp. pneumoniae (strain ATCC 700721 / MGH 78578).